The primary structure comprises 712 residues: Methionine--tRNA ligase (712 aa).

The 'HIGH' region signature appears at Pro20 to His30. Positions 151, 154, 163, and 167 each coordinate Zn(2+). The 'KMSKS' region signature appears at Lys334–Thr338. Lys337 contacts ATP. The interval Ala559–Ala585 is disordered. In terms of domain architecture, tRNA-binding spans Asp610–Arg712.

Belongs to the class-I aminoacyl-tRNA synthetase family. MetG type 1 subfamily. As to quaternary structure, homodimer. Zn(2+) serves as cofactor.

It is found in the cytoplasm. It carries out the reaction tRNA(Met) + L-methionine + ATP = L-methionyl-tRNA(Met) + AMP + diphosphate. Its function is as follows. Is required not only for elongation of protein synthesis but also for the initiation of all mRNA translation through initiator tRNA(fMet) aminoacylation. This chain is Methionine--tRNA ligase, found in Methanosarcina acetivorans (strain ATCC 35395 / DSM 2834 / JCM 12185 / C2A).